The chain runs to 203 residues: Late transcription elongation factor OPG110 (203 aa).

A compositionally biased stretch (basic and acidic residues) spans 25–36 (KNSAENKDKNED). The interval 25 to 100 (KNSAENKDKN…SPGVSDIVES (76 aa)) is disordered. Residues 49–67 (PKTKRATTPRKPAATKRST) are compositionally biased toward basic residues. Phosphothreonine occurs at positions 84 and 85.

The protein belongs to the orthopoxvirus OPG110 family. In terms of assembly, interacts with the DNA polymerase processivity factor A20. Interacts with B1R kinase. Interacts with the late transcription factors VLTF-1 and VLTF-3. Interacts with the late transcription elongation factor G2. Interacts with itself. Might be part of a transcription complex composed at least of G2, A18, and H5. Post-translationally, phosphorylated at multiple sites. Phosphorylation is necessary for cleavage activity. Phosphorylated by the viral B1R and F10 kinases.

The protein localises to the virion. The protein resides in the host cytoplasm. Involved in the co-transcriptional or post-transcriptional endoribonucleolytic cleavage that generates sequence-homogeneous 3' ends during late transcription. Involved in postreplicative transcription elongation on intermediate and late genes. Also involved in DNA replication and in multiple steps of virion morphogenesis. Required both for inclusion of virosoplasm into crescents as well as for maturation of immature virions (IV) into mature virions (MV). The sequence is that of Late transcription elongation factor OPG110 (OPG110) from Bos taurus (Bovine).